Consider the following 77-residue polypeptide: uncharacterized protein (77 aa).

A compositionally biased stretch (polar residues) spans 1 to 15 (MNRTSESVEPQQNEK). Disordered regions lie at residues 1–20 (MNRT…AVHW) and 31–52 (TYSN…QRTF). The span at 33 to 44 (SNEDDEDNEEGD) shows a compositional bias: acidic residues.

This is an uncharacterized protein from Schizosaccharomyces pombe (strain 972 / ATCC 24843) (Fission yeast).